The following is a 233-amino-acid chain: Phosphoribosylformylglycinamidine synthase subunit PurQ (233 aa).

Residues 3-233 (SAVLVFPGIN…GLAQHLAKAA (231 aa)) form the Glutamine amidotransferase type-1 domain. C87 (nucleophile) is an active-site residue. Catalysis depends on residues H204 and E206.

In terms of assembly, part of the FGAM synthase complex composed of 1 PurL, 1 PurQ and 2 PurS subunits.

The protein resides in the cytoplasm. The catalysed reaction is N(2)-formyl-N(1)-(5-phospho-beta-D-ribosyl)glycinamide + L-glutamine + ATP + H2O = 2-formamido-N(1)-(5-O-phospho-beta-D-ribosyl)acetamidine + L-glutamate + ADP + phosphate + H(+). It catalyses the reaction L-glutamine + H2O = L-glutamate + NH4(+). It participates in purine metabolism; IMP biosynthesis via de novo pathway; 5-amino-1-(5-phospho-D-ribosyl)imidazole from N(2)-formyl-N(1)-(5-phospho-D-ribosyl)glycinamide: step 1/2. Functionally, part of the phosphoribosylformylglycinamidine synthase complex involved in the purines biosynthetic pathway. Catalyzes the ATP-dependent conversion of formylglycinamide ribonucleotide (FGAR) and glutamine to yield formylglycinamidine ribonucleotide (FGAM) and glutamate. The FGAM synthase complex is composed of three subunits. PurQ produces an ammonia molecule by converting glutamine to glutamate. PurL transfers the ammonia molecule to FGAR to form FGAM in an ATP-dependent manner. PurS interacts with PurQ and PurL and is thought to assist in the transfer of the ammonia molecule from PurQ to PurL. The protein is Phosphoribosylformylglycinamidine synthase subunit PurQ of Rhodopseudomonas palustris (strain ATCC BAA-98 / CGA009).